The sequence spans 244 residues: Small ribosomal subunit protein uS3 (244 aa).

The KH type-2 domain occupies 39–107 (VREMLRKKLA…PAHINVTEVR (69 aa)). A disordered region spans residues 213–244 (VGQEKQDDSPRNDRNDRGDRGDRPSRPAREAR). The segment covering 216-244 (EKQDDSPRNDRNDRGDRGDRPSRPAREAR) has biased composition (basic and acidic residues).

The protein belongs to the universal ribosomal protein uS3 family. As to quaternary structure, part of the 30S ribosomal subunit. Forms a tight complex with proteins S10 and S14.

Binds the lower part of the 30S subunit head. Binds mRNA in the 70S ribosome, positioning it for translation. The chain is Small ribosomal subunit protein uS3 from Xanthomonas campestris pv. campestris (strain 8004).